The following is a 592-amino-acid chain: ATP-binding protein Uup (592 aa).

2 consecutive ABC transporter domains span residues 1–221 and 289–516; these read MPLI…RIEK and FKLK…KSNI. ATP contacts are provided by residues 36–43 and 321–328; these read GKNGAGKS and GNNGSGKS. Residues 516-550 adopt a coiled-coil conformation; sequence ISFLKTKQNQVKKELKKVLNEIEKIENSIKTLKIQ. Positions 518-592 are C-terminal domain (CTD), binds DNA; the sequence is FLKTKQNQVK…IYWENLEKKL (75 aa).

This sequence belongs to the ABC transporter superfamily. ABCF family. Uup subfamily.

The protein resides in the cytoplasm. The catalysed reaction is ATP + H2O = ADP + phosphate + H(+). Its function is as follows. Probably plays a role in ribosome assembly or function. May be involved in resolution of branched DNA intermediates that result from template switching in postreplication gaps. Binds DNA and has ATPase activity. The chain is ATP-binding protein Uup from Buchnera aphidicola subsp. Schizaphis graminum (strain Sg).